A 112-amino-acid polypeptide reads, in one-letter code: Nitrogen regulatory protein P-II (112 aa).

Phosphoserine is present on Ser-49. An O-UMP-tyrosine modification is found at Tyr-51.

Belongs to the P(II) protein family. In terms of assembly, homotrimer. In terms of processing, phosphorylation dependent on the nitrogen source and spectral light quality.

Functionally, P-II indirectly controls the transcription of the GS gene (glnA). P-II prevents NR-II-catalyzed conversion of NR-I to NR-I-phosphate, the transcriptional activator of glnA. When P-II is phosphorylated, these events are reversed. In nitrogen-limiting conditions, when the ratio of Gln to 2-ketoglutarate decreases, P-II is phosphorylated which allows the deadenylation of glutamine synthetase (GS), thus activating the enzyme. This is Nitrogen regulatory protein P-II (glnB) from Microchaete diplosiphon (Fremyella diplosiphon).